Reading from the N-terminus, the 917-residue chain is Bifunctional aspartokinase/homoserine dehydrogenase 2, chloroplastic (917 aa).

Residues 1-89 (MQGLAVSCQL…EVNTYLPKGD (89 aa)) constitute a chloroplast transit peptide. The segment at 90–338 (MWSVHKFGGT…VSEAVILSTL (249 aa)) is aspartokinase. An interface region spans residues 339–563 (SYQEAWEMSY…LSKTTLAVGI (225 aa)). 2 ACT domains span residues 413–488 (VEGT…VING) and 494–571 (AVGL…LIGG). The homoserine dehydrogenase stretch occupies residues 564-917 (IGPGLIGGAL…RLASYLGAPS (354 aa)). Residues isoleucine 569 and threonine 650 each contribute to the NAD(+) site. NADP(+)-binding residues include isoleucine 569, threonine 650, and lysine 674. NADPH-binding residues include isoleucine 569, threonine 650, and lysine 674. Positions 701, 704, 706, and 708 each coordinate Na(+). NADP(+)-binding residues include glycine 759 and glutamate 762. 2 residues coordinate L-homoserine: glutamate 762 and aspartate 773. Lysine 777 serves as the catalytic Proton donor. Glycine 894 provides a ligand contact to NAD(+). Glycine 894 is a binding site for NADP(+). Glycine 894 contributes to the NADPH binding site.

It in the N-terminal section; belongs to the aspartokinase family. In the C-terminal section; belongs to the homoserine dehydrogenase family. In terms of assembly, homo- or heterodimer. A metal cation is required as a cofactor.

The protein localises to the plastid. Its subcellular location is the chloroplast. The catalysed reaction is L-homoserine + NADP(+) = L-aspartate 4-semialdehyde + NADPH + H(+). It carries out the reaction L-homoserine + NAD(+) = L-aspartate 4-semialdehyde + NADH + H(+). It catalyses the reaction L-aspartate + ATP = 4-phospho-L-aspartate + ADP. It functions in the pathway amino-acid biosynthesis; L-lysine biosynthesis via DAP pathway; (S)-tetrahydrodipicolinate from L-aspartate: step 1/4. Its pathway is amino-acid biosynthesis; L-methionine biosynthesis via de novo pathway; L-homoserine from L-aspartate: step 1/3. The protein operates within amino-acid biosynthesis; L-methionine biosynthesis via de novo pathway; L-homoserine from L-aspartate: step 3/3. It participates in amino-acid biosynthesis; L-threonine biosynthesis; L-threonine from L-aspartate: step 1/5. It functions in the pathway amino-acid biosynthesis; L-threonine biosynthesis; L-threonine from L-aspartate: step 3/5. Bifunctional aspartate kinase and homoserine dehydrogenase that catalyzes the first and the third steps toward the synthesis of lysine, methionine and threonine from aspartate. The protein is Bifunctional aspartokinase/homoserine dehydrogenase 2, chloroplastic (AKHSDH2) of Zea mays (Maize).